Reading from the N-terminus, the 427-residue chain is POU domain protein CF1A (427 aa).

4 disordered regions span residues Tyr-39–Ser-77, His-196–Ser-217, Thr-288–Thr-309, and His-390–His-427. Positions Ala-49–Gly-66 are enriched in low complexity. The segment covering Gln-67–Ser-77 has biased composition (gly residues). Residues Glu-212 to Asp-286 form the POU-specific domain. Residues Lys-304–Thr-363 constitute a DNA-binding region (homeobox).

The protein belongs to the POU transcription factor family. Class-3 subfamily. As to expression, coexpressed with acj6 in overlapping subsets of neurons in the embryonic epidermis and central nervous system. First detected in the precursor of the tracheal pits and the stomodeal invagination and later in the peripheral nervous system.

The protein resides in the nucleus. Binds to a DNA sequence element required for the expression of the dopa decarboxylase gene (Ddc) in specific dopaminergic neurons. Could also play an early role in specific ectodermal cells, and a subsequent role in the embryonic nervous system. This chain is POU domain protein CF1A (vvl), found in Drosophila melanogaster (Fruit fly).